Here is a 308-residue protein sequence, read N- to C-terminus: Putative S-adenosyl-L-methionine-dependent methyltransferase Mb3816c (308 aa).

S-adenosyl-L-methionine is bound by residues Asp131 and 160–161 (DL).

The protein belongs to the UPF0677 family.

Its function is as follows. Exhibits S-adenosyl-L-methionine-dependent methyltransferase activity. The protein is Putative S-adenosyl-L-methionine-dependent methyltransferase Mb3816c of Mycobacterium bovis (strain ATCC BAA-935 / AF2122/97).